A 728-amino-acid polypeptide reads, in one-letter code: Catalase-peroxidase 2 (728 aa).

Residues 1–20 form a disordered region; it reads MSNEGKCPFNHGKRNGTTNR. A cross-link (tryptophyl-tyrosyl-methioninium (Trp-Tyr) (with M-240)) is located at residues 91–214; sequence WHSAGTYRTG…LAAVQMGLIY (124 aa). The active-site Proton acceptor is the histidine 92. The segment at residues 214–240 is a cross-link (tryptophyl-tyrosyl-methioninium (Tyr-Met) (with W-91)); that stretch reads YVNPEGPNGNPDPLASARDIRETFARM. Histidine 255 contacts heme b. The tract at residues 335–355 is disordered; sequence AHQWQPKGGAGADSVPDPFEP.

It belongs to the peroxidase family. Peroxidase/catalase subfamily. As to quaternary structure, homodimer or homotetramer. Requires heme b as cofactor. Post-translationally, formation of the three residue Trp-Tyr-Met cross-link is important for the catalase, but not the peroxidase activity of the enzyme.

The enzyme catalyses H2O2 + AH2 = A + 2 H2O. It catalyses the reaction 2 H2O2 = O2 + 2 H2O. Its function is as follows. Bifunctional enzyme with both catalase and broad-spectrum peroxidase activity. The protein is Catalase-peroxidase 2 of Burkholderia cenocepacia (strain HI2424).